Reading from the N-terminus, the 188-residue chain is MANNDEITTSSHASPAVNHESISRAKQRIKDGLATRRSWRVMFDLHSTGLPHGVSDVFSRIKTNLAYFRSNYAIVILNVIFFSLIWHPTSLIVFTGLVFLWIFLYFLRDVPLKVFRFQIDDRAVLIGLSVITIVLLLLTNATFNIVAALMAGAVLVLIHAVIRKTDDLFLDEEAATTETSGLTSHPSS.

Residues 1–13 show a composition bias toward polar residues; that stretch reads MANNDEITTSSHA. The tract at residues 1–25 is disordered; that stretch reads MANNDEITTSSHASPAVNHESISRA. The next 4 helical transmembrane spans lie at 67 to 86, 90 to 107, 119 to 139, and 142 to 162; these read YFRS…SLIW, SLIV…LYFL, IDDR…LLLT, and TFNI…HAVI.

Belongs to the PRA1 family.

The protein resides in the endosome membrane. May be involved in both secretory and endocytic intracellular trafficking in the endosomal/prevacuolar compartments. In Arabidopsis thaliana (Mouse-ear cress), this protein is PRA1 family protein F4 (PRA1F4).